The sequence spans 331 residues: Tryptophan--tRNA ligase (331 aa).

Residues 10–12 (QPS) and 18–19 (GN) contribute to the ATP site. The short motif at 11-19 (PSGQLTLGN) is the 'HIGH' region element. Position 133 (D133) interacts with L-tryptophan. ATP is bound by residues 145-147 (GED), V184, and 193-197 (KMSKS). The short motif at 193-197 (KMSKS) is the 'KMSKS' region element.

Belongs to the class-I aminoacyl-tRNA synthetase family. Homodimer.

It is found in the cytoplasm. It catalyses the reaction tRNA(Trp) + L-tryptophan + ATP = L-tryptophyl-tRNA(Trp) + AMP + diphosphate + H(+). Its function is as follows. Catalyzes the attachment of tryptophan to tRNA(Trp). The polypeptide is Tryptophan--tRNA ligase (Listeria innocua serovar 6a (strain ATCC BAA-680 / CLIP 11262)).